Reading from the N-terminus, the 296-residue chain is Probable deoxyuridine 5'-triphosphate nucleotidohydrolase (296 aa).

Positions 66–102 (EIDKNIVKNLEDKVNCLEQDVQYLKNELKKKDADWQQ) form a coiled coil.

The protein belongs to the dUTPase family.

It carries out the reaction dUTP + H2O = dUMP + diphosphate + H(+). The protein operates within pyrimidine metabolism; dUMP biosynthesis; dUMP from dCTP (dUTP route): step 2/2. Its function is as follows. This enzyme is involved in nucleotide metabolism: it produces dUMP, the immediate precursor of thymidine nucleotides and it decreases the intracellular concentration of dUTP so that uracil cannot be incorporated into DNA. This is Probable deoxyuridine 5'-triphosphate nucleotidohydrolase from Acheta domesticus (House cricket).